A 152-amino-acid polypeptide reads, in one-letter code: Xanthine-guanine phosphoribosyltransferase (152 aa).

Residues 37-38 (RG), arginine 69, and 88-96 (DDLVDTGGT) contribute to the 5-phospho-alpha-D-ribose 1-diphosphate site. Position 69 (arginine 69) interacts with GMP. Aspartate 89 provides a ligand contact to Mg(2+). Guanine-binding residues include aspartate 92 and isoleucine 135. Aspartate 92 and isoleucine 135 together coordinate xanthine. Residues 92 to 96 (DTGGT) and 134 to 135 (WI) each bind GMP.

It belongs to the purine/pyrimidine phosphoribosyltransferase family. XGPT subfamily. Homotetramer. Requires Mg(2+) as cofactor.

Its subcellular location is the cell inner membrane. It carries out the reaction GMP + diphosphate = guanine + 5-phospho-alpha-D-ribose 1-diphosphate. The catalysed reaction is XMP + diphosphate = xanthine + 5-phospho-alpha-D-ribose 1-diphosphate. The enzyme catalyses IMP + diphosphate = hypoxanthine + 5-phospho-alpha-D-ribose 1-diphosphate. Its pathway is purine metabolism; GMP biosynthesis via salvage pathway; GMP from guanine: step 1/1. The protein operates within purine metabolism; XMP biosynthesis via salvage pathway; XMP from xanthine: step 1/1. Its function is as follows. Purine salvage pathway enzyme that catalyzes the transfer of the ribosyl-5-phosphate group from 5-phospho-alpha-D-ribose 1-diphosphate (PRPP) to the N9 position of the 6-oxopurines guanine and xanthine to form the corresponding ribonucleotides GMP (guanosine 5'-monophosphate) and XMP (xanthosine 5'-monophosphate), with the release of PPi. To a lesser extent, also acts on hypoxanthine. In Pectobacterium carotovorum subsp. carotovorum (strain PC1), this protein is Xanthine-guanine phosphoribosyltransferase.